We begin with the raw amino-acid sequence, 208 residues long: Small ribosomal subunit protein uS4 (208 aa).

Residues 31–51 form a disordered region; it reads SALDKRAYGPGQHGQRRAKTS. Residues 98–160 enclose the S4 RNA-binding domain; it reads RRLDNVVYRM…TKSNSQVVRA (63 aa).

It belongs to the universal ribosomal protein uS4 family. As to quaternary structure, part of the 30S ribosomal subunit. Contacts protein S5. The interaction surface between S4 and S5 is involved in control of translational fidelity.

One of the primary rRNA binding proteins, it binds directly to 16S rRNA where it nucleates assembly of the body of the 30S subunit. Its function is as follows. With S5 and S12 plays an important role in translational accuracy. This is Small ribosomal subunit protein uS4 from Helicobacter pylori (strain ATCC 700392 / 26695) (Campylobacter pylori).